A 147-amino-acid chain; its full sequence is UPF0306 protein YhbP (147 aa).

This sequence belongs to the UPF0306 family.

The chain is UPF0306 protein YhbP from Escherichia coli O6:K15:H31 (strain 536 / UPEC).